The sequence spans 514 residues: 2,3-bisphosphoglycerate-independent phosphoglycerate mutase (514 aa).

2 residues coordinate Mn(2+): D14 and S64. S64 acts as the Phosphoserine intermediate in catalysis. Residues H125, R155–D156, R187, R193, R263–R266, and K336 each bind substrate. Residues D403, H407, D444, H445, and H463 each coordinate Mn(2+).

The protein belongs to the BPG-independent phosphoglycerate mutase family. In terms of assembly, monomer. Mn(2+) is required as a cofactor.

It catalyses the reaction (2R)-2-phosphoglycerate = (2R)-3-phosphoglycerate. Its pathway is carbohydrate degradation; glycolysis; pyruvate from D-glyceraldehyde 3-phosphate: step 3/5. Catalyzes the interconversion of 2-phosphoglycerate and 3-phosphoglycerate. In Escherichia coli O6:H1 (strain CFT073 / ATCC 700928 / UPEC), this protein is 2,3-bisphosphoglycerate-independent phosphoglycerate mutase.